A 314-amino-acid chain; its full sequence is Probable tRNA pseudouridine synthase B (314 aa).

The segment covering 1-10 has biased composition (basic residues); sequence MATRGRHRSR. The segment at 1–30 is disordered; that stretch reads MATRGRHRSRTSGTSSEPMTLRAPPDERDL. Catalysis depends on D72, which acts as the Nucleophile. The PUA domain occupies 237-314; sequence LPRVTIAPSA…LVVELDRMLV (78 aa).

This sequence belongs to the pseudouridine synthase TruB family. Type 2 subfamily.

It carries out the reaction uridine(55) in tRNA = pseudouridine(55) in tRNA. Its function is as follows. Could be responsible for synthesis of pseudouridine from uracil-55 in the psi GC loop of transfer RNAs. This Haloarcula marismortui (strain ATCC 43049 / DSM 3752 / JCM 8966 / VKM B-1809) (Halobacterium marismortui) protein is Probable tRNA pseudouridine synthase B.